The following is a 184-amino-acid chain: Large ribosomal subunit protein uL5c (184 aa).

The protein belongs to the universal ribosomal protein uL5 family. As to quaternary structure, part of the 50S ribosomal subunit; contacts the 5S rRNA.

It is found in the plastid. Its subcellular location is the chloroplast. Its function is as follows. Binds 5S rRNA, forms part of the central protuberance of the 50S subunit. This is Large ribosomal subunit protein uL5c (rpl5) from Zygnema circumcarinatum (Green alga).